Reading from the N-terminus, the 319-residue chain is DNA-directed RNA polymerases IV and V subunit 3B (319 aa).

Residue M1 is modified to N-acetylmethionine.

It belongs to the archaeal Rpo3/eukaryotic RPB3 RNA polymerase subunit family. As to quaternary structure, component of the RNA polymerase IV and V complexes. Interacts with NRPB11, SHH1, GRP23 and NRPD1.

Its subcellular location is the nucleus. DNA-dependent RNA polymerase catalyzes the transcription of DNA into RNA using the four ribonucleoside triphosphates as substrates. Component of RNA polymerases IV and V which mediate short-interfering RNAs (siRNA) accumulation and subsequent RNA-directed DNA methylation-dependent (RdDM) transcriptional gene silencing (TGS) of endogenous repeated sequences, including transposable elements. The sequence is that of DNA-directed RNA polymerases IV and V subunit 3B (NRPD3B) from Arabidopsis thaliana (Mouse-ear cress).